We begin with the raw amino-acid sequence, 398 residues long: Serpin-ZX (398 aa).

The segment at 342–366 (GTEAAARTARVVTLRSLPVEPVKVD) is RCL.

Belongs to the serpin family. As to expression, expressed in roots, coleoptiles, shoots, leaves, embryo and endosperm.

Functionally, inhibits chymotrypsin, cathepsin G and trypsin in vitro. The chain is Serpin-ZX (PAZX) from Hordeum vulgare (Barley).